The sequence spans 1225 residues: Hybrid signal transduction histidine kinase C (1225 aa).

Residues 8–28 (GFLLSTLFFTIISIILFYFFI) traverse the membrane as a helical segment. Positions 313 to 356 (LSPRSLSSSSSSSPSSSNNNGNTNNSGSLSPRSSNSNGSAVSPR) are enriched in low complexity. The interval 313 to 407 (LSPRSLSSSS…SNGTISSPRT (95 aa)) is disordered. Positions 357-368 (NVSSNSMSPRGQ) are enriched in polar residues. A compositionally biased stretch (low complexity) spans 370–388 (SDRSISSPRGSSSSSSSSS). The segment covering 389 to 407 (NELAISPRNSNGTISSPRT) has biased composition (polar residues). The Histidine kinase domain maps to 426–653 (HLSHELRTPI…TFHFVIPLET (228 aa)). His429 is modified (phosphohistidine; by autocatalysis). The Response regulatory 1 domain occupies 669 to 784 (SVLVVDKNPY…HLVACLLASM (116 aa)). Asp721 bears the 4-aspartylphosphate mark. Disordered stretches follow at residues 809–832 (NNIN…SVYG), 941–974 (DDDS…DELN), and 1021–1076 (YLSP…PRAP). The span at 945–954 (NNYCNTTGTM) shows a compositional bias: polar residues. Over residues 1023-1037 (SPRSMNNNNGNNDNG) the composition is skewed to low complexity. Positions 1058–1072 (TSDTSSLAQSPNSLS) are enriched in polar residues. Residues 1078–1200 (KIMILDDNPV…CLELILRKWE (123 aa)) enclose the Response regulatory 2 domain. Position 1127 is a 4-aspartylphosphate (Asp1127).

The protein resides in the membrane. The enzyme catalyses ATP + protein L-histidine = ADP + protein N-phospho-L-histidine.. Acts in a signal transduction pathway that regulates the slug versus culmination choice. Believed to be the first component of a phosphorelay that couples the sensing of ammonia to the modulation of PKA activity and hence activates culmination and spore germination. Ammonium transporters amtA and amtC are thought to respectively activate and inhibit dhkC phosphorelay. This protein probably undergoes an ATP-dependent autophosphorylation at conserved His residue in the kinase core, and a phosphoryl group is then transferred to a conserved aspartate residue in the receiver domain. This chain is Hybrid signal transduction histidine kinase C (dhkC), found in Dictyostelium discoideum (Social amoeba).